A 931-amino-acid chain; its full sequence is Elicitor of plant defense protein 1 (931 aa).

The segment at 13–32 (NYNSVIPPPEPLNTDPDMHP) is disordered. The uDENN domain maps to 19-277 (PPPEPLNTDP…NLCTEAFNPL (259 aa)). The 133-residue stretch at 301 to 433 (EIPGSRSIDL…ARRKLMSLLQ (133 aa)) folds into the cDENN domain. Residues 435 to 799 (AAPHKLRYGV…DREMQPANNA (365 aa)) form the dDENN domain. Disordered stretches follow at residues 478-552 (LGKW…SRSD) and 566-586 (SGHF…DKHP). The span at 521–537 (TSKSGKTSPQSSVSPVS) shows a compositional bias: polar residues. Over residues 566-575 (SGHFGEEKMR) the composition is skewed to basic and acidic residues. Residues 666–714 (GHCFNWIPKDNTSICNICNDHAEGDGIYKCTGCKIFSHGRCLGHASLVC) form a Phorbol-ester/DAG-type zinc finger.

It belongs to the EPD1 elicitor family.

It is found in the secreted. Its subcellular location is the host cell. Functionally, acts as an elicitor that triggers cell death and defense responses in the host plants. The chain is Elicitor of plant defense protein 1 from Fusarium odoratissimum (strain NRRL 54006).